Here is a 270-residue protein sequence, read N- to C-terminus: Phosphonoacetaldehyde hydrolase (270 aa).

Aspartate 11 acts as the Nucleophile in catalysis. The Mg(2+) site is built by aspartate 11 and alanine 13. Catalysis depends on lysine 53, which acts as the Schiff-base intermediate with substrate. Aspartate 187 lines the Mg(2+) pocket.

It belongs to the HAD-like hydrolase superfamily. PhnX family. In terms of assembly, homodimer. The cofactor is Mg(2+).

The catalysed reaction is phosphonoacetaldehyde + H2O = acetaldehyde + phosphate + H(+). In terms of biological role, involved in phosphonate degradation. The polypeptide is Phosphonoacetaldehyde hydrolase (Salmonella gallinarum (strain 287/91 / NCTC 13346)).